The primary structure comprises 959 residues: Bifunctional premutilin synthase (959 aa).

The class II diterpene cyclase stretch occupies residues 1–542; that stretch reads MGLSEDLHAR…ALNVPIPRFD (542 aa). The short motif at 309–312 is the DXDD motif element; sequence DADM. The For class II diterpene cyclase activity role is filled by D311. Residues 543 to 959 are class I diterpene synthase; the sequence is PASITTLPPI…TANGSNGIHH (417 aa). D649 functions as the For class I diterpene synthase activity in the catalytic mechanism. 3 residues coordinate Mg(2+): D649, D653, and N824. The short motif at 649–653 is the DDXXD motif element; that stretch reads DDYLD. Positions 931–959 are disordered; it reads KGANGVKKTNGLTTNGTKATANGSNGIHH. Residues 934-959 show a composition bias toward low complexity; that stretch reads NGVKKTNGLTTNGTKATANGSNGIHH.

The protein belongs to the terpene synthase family. The cofactor is Mg(2+).

It participates in secondary metabolite biosynthesis; terpenoid biosynthesis. Its function is as follows. Bifunctional premutilin synthase; part of the gene cluster that mediates the biosynthesis of pleuromutilin, a tricyclic diterpene showing antibacterial properties. The geranylgeranyl diphosphate (GGPP) synthase ple4 catalyzes the first step in pleuromutilin biosynthesis. GGPP is then substrate of the premutilin synthase (PS) ple3 to yield premutilin. Premutilin synthase is a bifunctional enzyme composed of the fusion of a class II diterpene cyclase (DTC) and a class I diterpene synthase (DTS), with the corresponding domains and active sites containing characteristic aspartate-rich motifs. GGPP is first converted to mutildienyl-diphosphate (MPP) at the class II DTC site. MPP is subsequently further cyclized at the class I DTS site, followed by a 1,5-hydride shift and addition of water prior to terminating deprotonation, to yield premutilin. The cytochrome P450 monooxygenases ple5 and ple6 hydroxylate premutilin at C-11 and C-3, respectively, producing 11-hydroxypremutilin and 3-hydroxypremutilin. The combination of the actions of both ple5 and ple6 leads to the production of 3,11-dihydroxypremutilin. The short chain dehydrogenase ple7 further converts 3,11-dihydroxypremutilin into mutilin. The acetyltransferase ple2 then acetylates mutilin to produce 14-O-acetylmutilin. Finally, the cytochrome P450 monooxygenase ple1 catalyzes hydroxylation on the alpha position of the acetyl side chain of 14-O-acetylmutilin to yield pleuromutilin. This Rhodocybe pseudopiperita (Clitopilus pseudopiperitus) protein is Bifunctional premutilin synthase.